Here is a 991-residue protein sequence, read N- to C-terminus: Glutamate receptor 1 (991 aa).

Positions 1 to 27 are cleaved as a signal peptide; it reads MHSRLKFLAYLHFICASSIFWPEFSSA. The Extracellular segment spans residues 28–611; sequence QQQQQTVSLT…VFSFLNPLSQ (584 aa). Residues asparagine 67, asparagine 195, asparagine 208, and asparagine 281 are each glycosylated (N-linked (GlcNAc...) asparagine). Disordered regions lie at residues 300 to 321 and 354 to 379; these read DSRK…GPNS and FRSN…NESS. A compositionally biased stretch (polar residues) spans 308 to 318; that stretch reads SGQSQSQNAGG. A compositionally biased stretch (low complexity) spans 365 to 379; it reads GGSSSSSATGTNESS. N-linked (GlcNAc...) asparagine glycans are attached at residues asparagine 376, asparagine 385, asparagine 426, asparagine 437, and asparagine 477. The chain crosses the membrane as a helical span at residues 612-632; that stretch reads EIWISVILSYVGVSFVLYFVT. The Cytoplasmic portion of the chain corresponds to 633–710; that stretch reads RFPPYEWRIV…PSIAGRIAAA (78 aa). Residues 711 to 731 traverse the membrane as a helical segment; it reads VWWFFTIILISSYTANLAAFL. Residues 732-895 lie on the Extracellular side of the membrane; the sequence is TVERMVAPIK…STPNELSLSN (164 aa). The chain crosses the membrane as a helical span at residues 896 to 916; that stretch reads VAGIYYILIGGLLLAVIVAIM. The Cytoplasmic portion of the chain corresponds to 917–991; that stretch reads EFFCRNKTPQ…ASNVRYQYSM (75 aa).

It belongs to the glutamate-gated ion channel (TC 1.A.10.1) family. In terms of assembly, homooligomer. As to expression, central nervous system.

It is found in the cell membrane. Its subcellular location is the postsynaptic cell membrane. Its function is as follows. Receptor for glutamate. L-glutamate acts as an excitatory neurotransmitter at many synapses in the central nervous system. The postsynaptic actions of Glu are mediated by a variety of receptors that are named according to their selective agonists. Forms ligand-gated ion channels which are activated by kainate. This is Glutamate receptor 1 (GluRIA) from Drosophila melanogaster (Fruit fly).